We begin with the raw amino-acid sequence, 628 residues long: 1-deoxy-D-xylulose-5-phosphate synthase (628 aa).

Residues His-72 and 113–115 (GHS) contribute to the thiamine diphosphate site. Mg(2+) is bound at residue Asp-144. Thiamine diphosphate is bound by residues 145 to 146 (GA), Asn-173, Tyr-284, and Glu-363. Asn-173 contributes to the Mg(2+) binding site.

It belongs to the transketolase family. DXPS subfamily. Homodimer. Mg(2+) is required as a cofactor. The cofactor is thiamine diphosphate.

It catalyses the reaction D-glyceraldehyde 3-phosphate + pyruvate + H(+) = 1-deoxy-D-xylulose 5-phosphate + CO2. Its pathway is metabolic intermediate biosynthesis; 1-deoxy-D-xylulose 5-phosphate biosynthesis; 1-deoxy-D-xylulose 5-phosphate from D-glyceraldehyde 3-phosphate and pyruvate: step 1/1. In terms of biological role, catalyzes the acyloin condensation reaction between C atoms 2 and 3 of pyruvate and glyceraldehyde 3-phosphate to yield 1-deoxy-D-xylulose-5-phosphate (DXP). The sequence is that of 1-deoxy-D-xylulose-5-phosphate synthase from Brevibacillus brevis (strain 47 / JCM 6285 / NBRC 100599).